The primary structure comprises 383 residues: S-adenosylmethionine synthase (383 aa).

H15 is an ATP binding site. D17 is a Mg(2+) binding site. Position 43 (E43) interacts with K(+). Residues E56 and Q99 each contribute to the L-methionine site. A flexible loop region spans residues 99–109 (QSPDINQGVDR). Residues 164-166 (DAK), 230-231 (RF), D239, 245-246 (RK), A262, and K266 contribute to the ATP site. D239 is a binding site for L-methionine. K270 lines the L-methionine pocket.

The protein belongs to the AdoMet synthase family. As to quaternary structure, homotetramer; dimer of dimers. It depends on Mg(2+) as a cofactor. Requires K(+) as cofactor.

The protein localises to the cytoplasm. It carries out the reaction L-methionine + ATP + H2O = S-adenosyl-L-methionine + phosphate + diphosphate. It functions in the pathway amino-acid biosynthesis; S-adenosyl-L-methionine biosynthesis; S-adenosyl-L-methionine from L-methionine: step 1/1. In terms of biological role, catalyzes the formation of S-adenosylmethionine (AdoMet) from methionine and ATP. The overall synthetic reaction is composed of two sequential steps, AdoMet formation and the subsequent tripolyphosphate hydrolysis which occurs prior to release of AdoMet from the enzyme. The chain is S-adenosylmethionine synthase from Shewanella sp. (strain ANA-3).